Reading from the N-terminus, the 677-residue chain is DNA-directed RNA polymerase subunit beta' (677 aa).

C69, C71, C87, and C90 together coordinate Zn(2+). Positions 489, 491, and 493 each coordinate Mg(2+).

Belongs to the RNA polymerase beta' chain family. RpoC1 subfamily. In plastids the minimal PEP RNA polymerase catalytic core is composed of four subunits: alpha, beta, beta', and beta''. When a (nuclear-encoded) sigma factor is associated with the core the holoenzyme is formed, which can initiate transcription. Mg(2+) is required as a cofactor. It depends on Zn(2+) as a cofactor.

The protein resides in the plastid. It is found in the chloroplast. It catalyses the reaction RNA(n) + a ribonucleoside 5'-triphosphate = RNA(n+1) + diphosphate. Functionally, DNA-dependent RNA polymerase catalyzes the transcription of DNA into RNA using the four ribonucleoside triphosphates as substrates. The polypeptide is DNA-directed RNA polymerase subunit beta' (Daucus carota (Wild carrot)).